The chain runs to 163 residues: NAD(P)H-quinone oxidoreductase subunit I, chloroplastic (163 aa).

2 consecutive 4Fe-4S ferredoxin-type domains span residues Gly-55–Lys-84 and Leu-95–Glu-124. Residues Cys-64, Cys-67, Cys-70, Cys-74, Cys-104, Cys-107, Cys-110, and Cys-114 each coordinate [4Fe-4S] cluster.

This sequence belongs to the complex I 23 kDa subunit family. In terms of assembly, NDH is composed of at least 16 different subunits, 5 of which are encoded in the nucleus. [4Fe-4S] cluster is required as a cofactor.

It localises to the plastid. The protein localises to the chloroplast thylakoid membrane. It carries out the reaction a plastoquinone + NADH + (n+1) H(+)(in) = a plastoquinol + NAD(+) + n H(+)(out). The catalysed reaction is a plastoquinone + NADPH + (n+1) H(+)(in) = a plastoquinol + NADP(+) + n H(+)(out). Functionally, NDH shuttles electrons from NAD(P)H:plastoquinone, via FMN and iron-sulfur (Fe-S) centers, to quinones in the photosynthetic chain and possibly in a chloroplast respiratory chain. The immediate electron acceptor for the enzyme in this species is believed to be plastoquinone. Couples the redox reaction to proton translocation, and thus conserves the redox energy in a proton gradient. In Glycine max (Soybean), this protein is NAD(P)H-quinone oxidoreductase subunit I, chloroplastic.